The sequence spans 291 residues: MTFAFSKKIELKPILKFDTPKVYSYEIIQEIEALVQRLFLQVWRRPATLMAGIIQPLLWLVLFGGLFCNAPVNLFTINTSYNRFLSSGIIVFTSFTGALNSGLPLMFDREFGFLNRLLTAPLISRTSIIFSSATFMTCLSLIQVIFIVIASLFMGNSPLSSNSTLIFALIVLLVTVGVTMLSLALSFTLPGHIELLALILVVNLPFLFSSTALAPLYFMPPWLQLIASLNPLSYAIEGIRYIYSNTDWNFTESVIKISWGDISLGQIISLLLFLDVIGAYIVSNILKARLN.

The next 6 helical transmembrane spans lie at 47 to 67 (ATLM…GGLF), 87 to 107 (SGII…PLMF), 135 to 155 (FMTC…LFMG), 165 to 185 (LIFA…SLAL), 195 to 215 (LLAL…ALAP), and 262 to 282 (ISLG…AYIV). The ABC transmembrane type-2 domain maps to 47-289 (ATLMAGIIQP…YIVSNILKAR (243 aa)).

It belongs to the ABC-2 integral membrane protein family.

It is found in the plastid. The protein resides in the chloroplast membrane. The chain is Putative transport permease ycf38 (ycf38) from Porphyra purpurea (Red seaweed).